Consider the following 142-residue polypeptide: Nucleoside diphosphate kinase (142 aa).

The ATP site is built by lysine 11, phenylalanine 59, arginine 87, threonine 93, arginine 104, and asparagine 114. The Pros-phosphohistidine intermediate role is filled by histidine 117.

Belongs to the NDK family. In terms of assembly, homotetramer. It depends on Mg(2+) as a cofactor.

The protein localises to the cytoplasm. It carries out the reaction dZDP + ATP = dZTP + ADP. It catalyses the reaction a 2'-deoxyribonucleoside 5'-diphosphate + ATP = a 2'-deoxyribonucleoside 5'-triphosphate + ADP. The enzyme catalyses a ribonucleoside 5'-diphosphate + ATP = a ribonucleoside 5'-triphosphate + ADP. It participates in purine metabolism. Major role in the synthesis of nucleoside triphosphates other than ATP. The ATP gamma phosphate is transferred to the NDP beta phosphate via a ping-pong mechanism, using a phosphorylated active-site intermediate. In terms of biological role, (Microbial infection) Catalyzes the phosphorylation of dZDP to dZTP, when the bacterium is infected by a phage that produces the substrate for the synthesis of dZTP (2- amino-2'-deoxyadenosine 5'-triphosphate), which is then used by the phage as a DNA polymerase substrate. The protein is Nucleoside diphosphate kinase of Vibrio cholerae serotype O1 (strain ATCC 39315 / El Tor Inaba N16961).